Reading from the N-terminus, the 158-residue chain is MNKKFLKCGTLFLISCSILGSTIPAVTVFSDEVTITYNSENNSEKNELYNQLSAEKKGQFDELVSNLNLSEQEQLDLLQQYKEEHPRRAKRGIKSAIIKKVARFLAAKVGQKSVVEITDYLFEWQDNLEAGAENYLVQYGWDRNIAHWTIKTVSFIFL.

The signal sequence occupies residues 1 to 30 (MNKKFLKCGTLFLISCSILGSTIPAVTVFS).

This is an uncharacterized protein from Streptococcus pneumoniae serotype 2 (strain D39 / NCTC 7466).